The primary structure comprises 91 residues: Hepcidin-2 (91 aa).

The N-terminal stretch at 1 to 24 (MKLSNVFLAAVVILTCVCVFQITA) is a signal peptide. The propeptide occupies 25–64 (VPFIQQVQDEHHVESEELQENQHLTEAEHRLTDPLVLFRT). Disulfide bonds link Cys73–Cys89, Cys76–Cys79, Cys77–Cys85, and Cys80–Cys88.

The protein belongs to the hepcidin family.

It localises to the secreted. In terms of biological role, seems to act as a signaling molecule involved in the maintenance of iron homeostasis. Seems to be required in conjunction with HFE to regulate both intestinal iron absorption and iron storage in macrophages. May also have antimicrobial activity. The sequence is that of Hepcidin-2 (hamp2) from Danio rerio (Zebrafish).